The sequence spans 361 residues: Polyribonucleotide 5'-hydroxyl-kinase PH0197 (361 aa).

43-50 contacts ATP; that stretch reads GDVDTGKT.

A divalent metal cation serves as cofactor.

It catalyses the reaction a 5'-end dephospho-2'-deoxyribonucleoside-DNA + ATP = a 5'-end 5'-phospho-2'-deoxyribonucleoside-DNA + ADP + H(+). It carries out the reaction a 5'-end dephospho-ribonucleoside-RNA + ATP = a 5'-end 5'-phospho-ribonucleoside-RNA + ADP + H(+). With respect to regulation, DNA kinase activity is inhibited by 250 mM sodium chloride whereas RNA kinase activity is unaffected. Polynucleotide kinase that can phosphorylate the 5'-hydroxyl groups of both single-stranded RNA (ssRNA) and single-stranded DNA (ssDNA). Exhibits a strong preference for ssRNA. In Pyrococcus horikoshii (strain ATCC 700860 / DSM 12428 / JCM 9974 / NBRC 100139 / OT-3), this protein is Polyribonucleotide 5'-hydroxyl-kinase PH0197.